The sequence spans 566 residues: Arginine--tRNA ligase (566 aa).

A 'HIGH' region motif is present at residues 121 to 131 (ANPNGPFHIGH).

The protein belongs to the class-I aminoacyl-tRNA synthetase family.

It localises to the cytoplasm. It carries out the reaction tRNA(Arg) + L-arginine + ATP = L-arginyl-tRNA(Arg) + AMP + diphosphate. The sequence is that of Arginine--tRNA ligase from Methanococcus maripaludis (strain DSM 14266 / JCM 13030 / NBRC 101832 / S2 / LL).